We begin with the raw amino-acid sequence, 566 residues long: DNA ligase B (566 aa).

The active-site N6-AMP-lysine intermediate is lysine 125.

The protein belongs to the NAD-dependent DNA ligase family. LigB subfamily.

The catalysed reaction is NAD(+) + (deoxyribonucleotide)n-3'-hydroxyl + 5'-phospho-(deoxyribonucleotide)m = (deoxyribonucleotide)n+m + AMP + beta-nicotinamide D-nucleotide.. Functionally, catalyzes the formation of phosphodiester linkages between 5'-phosphoryl and 3'-hydroxyl groups in double-stranded DNA using NAD as a coenzyme and as the energy source for the reaction. This is DNA ligase B from Pseudomonas putida (strain GB-1).